The chain runs to 411 residues: Tyrosine--tRNA ligase (411 aa).

L-tyrosine is bound at residue tyrosine 34. Residues 39 to 48 carry the 'HIGH' region motif; the sequence is CTATSLHIGS. Residues tyrosine 171 and glutamine 175 each contribute to the L-tyrosine site. A 'KMSKS' region motif is present at residues 231–235; sequence KMGKT. Lysine 234 contributes to the ATP binding site. The S4 RNA-binding domain occupies 345–411; the sequence is ISAYELFHEA…GKKRHILVRV (67 aa).

It belongs to the class-I aminoacyl-tRNA synthetase family. TyrS type 1 subfamily. Homodimer.

Its subcellular location is the cytoplasm. The catalysed reaction is tRNA(Tyr) + L-tyrosine + ATP = L-tyrosyl-tRNA(Tyr) + AMP + diphosphate + H(+). Its function is as follows. Catalyzes the attachment of tyrosine to tRNA(Tyr) in a two-step reaction: tyrosine is first activated by ATP to form Tyr-AMP and then transferred to the acceptor end of tRNA(Tyr). The chain is Tyrosine--tRNA ligase from Rickettsia peacockii (strain Rustic).